Reading from the N-terminus, the 101-residue chain is uncharacterized protein (101 aa).

It localises to the cytoplasm. This is an uncharacterized protein from Saccharomyces cerevisiae (strain ATCC 204508 / S288c) (Baker's yeast).